The following is a 737-amino-acid chain: Cilium assembly protein DZIP1L (737 aa).

Positions 1-293 are interaction with Rab8; it reads MGFKGKYPQM…LKQSNEQFIQ (293 aa). A coiled-coil region spans residues 98-132; it reads VTDLKEAHTTAQEEIATLRKSLSESNNEVVQLHKR. Residues 144-167 form a C2H2-type zinc finger; sequence YPCHLCTKNFISNEALNVHIGRKH. 5 disordered regions span residues 167-187, 214-267, 415-548, 624-682, and 698-737; these read HRVA…DRDK, ERNI…KEQL, SEFL…RKDA, KSPL…VSRD, and IRGA…DNLK. Basic and acidic residues-rich tracts occupy residues 244–266 and 415–438; these read EPKE…RKEQ and SEFL…KGSE. Residues 457 to 469 are compositionally biased toward polar residues; the sequence is SAGSSDSNPTYTK. Acidic residues predominate over residues 492–510; that stretch reads SQEETENEEERSLTEEEGT. The span at 665-677 shows a compositional bias: polar residues; the sequence is SSEQQTRSPSPQR. Positions 724–737 are enriched in basic and acidic residues; sequence EDGKSFNDSDDNLK.

The protein belongs to the DZIP C2H2-type zinc-finger protein family. Component of a ciliary transition zone (TZ)-localized complex composed of DZIP1, Fam92 and Cby. Interacts directly with Cby. Interacts with Cep290 (via N-terminus). Interacts (via N-terminus) with Rab8. In terms of tissue distribution, in neurons of the second and third antennal segments, expressed at the tip of the dendrites.

Its subcellular location is the cytoplasm. It localises to the cytoskeleton. It is found in the microtubule organizing center. The protein localises to the centrosome. The protein resides in the centriole. Its subcellular location is the cilium basal body. In terms of biological role, component of the DZIP1-Fam92-Cby complex which promotes ciliogenesis in sensory neurons and spermatocytes by acting downstream of Cep290 to initiate early ciliary membrane formation and thus transition zone (TZ) assembly. During spermatogenesis, also regulates distal elongation of the basal-body and their docking (anchoring) to the plasma membrane and as a consequence, regulates the initiation and proper elongation of axonemal microtubules. Within the complex, required to recruit or stabilize Rab8, Fam92 and Cby at the distal basal body of cilia to promote early ciliary membrane formation and initiate TZ assembly. Also acts with Fam92 to restrict Cep290 localization to the proximal part of the TZ. May also be involved in recruitment or stabilization of Mks1 at the TZ. This chain is Cilium assembly protein DZIP1L, found in Drosophila melanogaster (Fruit fly).